The following is a 396-amino-acid chain: Tryptophan synthase beta chain (396 aa).

N6-(pyridoxal phosphate)lysine is present on Lys86.

Belongs to the TrpB family. Tetramer of two alpha and two beta chains. It depends on pyridoxal 5'-phosphate as a cofactor.

The enzyme catalyses (1S,2R)-1-C-(indol-3-yl)glycerol 3-phosphate + L-serine = D-glyceraldehyde 3-phosphate + L-tryptophan + H2O. Its pathway is amino-acid biosynthesis; L-tryptophan biosynthesis; L-tryptophan from chorismate: step 5/5. The beta subunit is responsible for the synthesis of L-tryptophan from indole and L-serine. The protein is Tryptophan synthase beta chain of Francisella tularensis subsp. novicida (strain U112).